A 513-amino-acid polypeptide reads, in one-letter code: Zinc finger CCCH-type with G patch domain-containing protein (513 aa).

Residues 155–178 (PCSYYLEGECRFDEAKCRFSHGAL) form a C3H1-type zinc finger. Acidic residues-rich tracts occupy residues 252-261 (DQDEDDELSS) and 273-283 (SDEAESDMDDL). The interval 252–283 (DQDEDDELSSEESTSSMRDASSDEAESDMDDL) is disordered. The G-patch domain maps to 312 to 358 (TRGIGSKLMEKMGYIHGTGLGSDGRGIVTPVSAQILPQGRSLDACME). Polar residues predominate over residues 477–495 (QVQMQSHKQELATLQAQER). Residues 477 to 513 (QVQMQSHKQELATLQAQERSLSKEQQTRKSKNKMFEF) form a disordered region. Residues 496–513 (SLSKEQQTRKSKNKMFEF) show a composition bias toward basic and acidic residues.

The protein resides in the nucleus. Functionally, transcription repressor. This Drosophila simulans (Fruit fly) protein is Zinc finger CCCH-type with G patch domain-containing protein.